The sequence spans 298 residues: Release factor glutamine methyltransferase (298 aa).

S-adenosyl-L-methionine contacts are provided by residues 131–135, aspartate 162, tryptophan 189, and asparagine 205; that span reads GTGTG. Residue 205–208 coordinates substrate; it reads NPPY.

It belongs to the protein N5-glutamine methyltransferase family. PrmC subfamily.

The catalysed reaction is L-glutaminyl-[peptide chain release factor] + S-adenosyl-L-methionine = N(5)-methyl-L-glutaminyl-[peptide chain release factor] + S-adenosyl-L-homocysteine + H(+). Methylates the class 1 translation termination release factors RF1/PrfA and RF2/PrfB on the glutamine residue of the universally conserved GGQ motif. The protein is Release factor glutamine methyltransferase of Pasteurella multocida (strain Pm70).